The following is a 218-amino-acid chain: Pyridoxine/pyridoxamine 5'-phosphate oxidase (218 aa).

Substrate-binding positions include 14 to 17 (RREY) and lysine 72. FMN is bound by residues 67-72 (RIVLLK), 82-83 (YT), arginine 88, lysine 89, and glutamine 111. 3 residues coordinate substrate: tyrosine 129, arginine 133, and serine 137. Residues 146 to 147 (QS) and tryptophan 191 each bind FMN. 197-199 (RLH) serves as a coordination point for substrate. An FMN-binding site is contributed by arginine 201.

Belongs to the pyridoxamine 5'-phosphate oxidase family. In terms of assembly, homodimer. The cofactor is FMN.

It catalyses the reaction pyridoxamine 5'-phosphate + O2 + H2O = pyridoxal 5'-phosphate + H2O2 + NH4(+). The enzyme catalyses pyridoxine 5'-phosphate + O2 = pyridoxal 5'-phosphate + H2O2. It functions in the pathway cofactor metabolism; pyridoxal 5'-phosphate salvage; pyridoxal 5'-phosphate from pyridoxamine 5'-phosphate: step 1/1. It participates in cofactor metabolism; pyridoxal 5'-phosphate salvage; pyridoxal 5'-phosphate from pyridoxine 5'-phosphate: step 1/1. Functionally, catalyzes the oxidation of either pyridoxine 5'-phosphate (PNP) or pyridoxamine 5'-phosphate (PMP) into pyridoxal 5'-phosphate (PLP). The sequence is that of Pyridoxine/pyridoxamine 5'-phosphate oxidase from Escherichia coli O45:K1 (strain S88 / ExPEC).